Here is a 178-residue protein sequence, read N- to C-terminus: Inorganic pyrophosphatase (178 aa).

Positions 31, 45, and 57 each coordinate substrate. Positions 67, 72, and 104 each coordinate Mg(2+). Residue Tyr-141 coordinates substrate.

Belongs to the PPase family. Homohexamer. Requires Mg(2+) as cofactor.

It is found in the cytoplasm. It carries out the reaction diphosphate + H2O = 2 phosphate + H(+). Catalyzes the hydrolysis of inorganic pyrophosphate (PPi) forming two phosphate ions. The sequence is that of Inorganic pyrophosphatase from Leptospira interrogans serogroup Icterohaemorrhagiae serovar copenhageni (strain Fiocruz L1-130).